The chain runs to 443 residues: Gasdermin-A2 (443 aa).

The tract at residues Met1–Gly249 is triggers pyroptosis. Arg9–Arg13 contributes to the a cardiolipin binding site. 4 beta stranded membrane-spanning segments follow: residues Asn78–Val95, Met99–Val120, Val164–Asn179, and Leu183–Ile197. A coiled-coil region spans residues Gly249–Thr312.

This sequence belongs to the gasdermin family. As to quaternary structure, homooligomer; homooligomeric ring-shaped pore complex containing 18-36 subunits when inserted in the membrane. Post-translationally, cleavage relieves autoinhibition by releasing the N-terminal moiety (Gasdermin-A2, N-terminal) that initiates pyroptosis. In contrast to Gsdma, not cleaved by bacterial effector protein SpeB. In terms of processing, palmitoylated. In terms of tissue distribution, expressed in the gastrointestinal tract, specifically from the middle to the upper region of the gastric mucosa in the glandular stomach.

The protein localises to the cytoplasm. Its subcellular location is the perinuclear region. It is found in the cytosol. The protein resides in the cell membrane. The full-length protein before cleavage is inactive: intramolecular interactions between N- and C-terminal domains mediate autoinhibition in the absence of activation signal. The intrinsic pyroptosis-inducing activity is carried by the released N-terminal moiety (Gasdermin-A2, N-terminal). This form constitutes the precursor of the pore-forming protein and acts as a sensor of infection: upon bacterial infection, specifically cleaved by some bacterial effector protein, releasing the N-terminal moiety (Gasdermin-A2, N-terminal) that binds to membranes and forms pores, triggering pyroptosis. In terms of biological role, pore-forming protein that causes membrane permeabilization and pyroptosis. Released upon cleavage of Gasdermin-A2, and binds to membrane inner leaflet lipids. Homooligomerizes within the membrane and forms pores of 10-15 nanometers (nm) of inner diameter, triggering pyroptosis. Binds to membrane inner leaflet lipids, such as phosphatidylinositol (4,5)-bisphosphate. This Mus musculus (Mouse) protein is Gasdermin-A2.